Reading from the N-terminus, the 125-residue chain is Crustacean hyperglycemic hormones 5 (125 aa).

Positions 1–34 (MKPGNTSFNMVSFRMVWTAMMATLLVAGASSAGT) are cleaved as a signal peptide. 3 disulfide bridges follow: C58/C94, C74/C90, and C77/C103. V123 is subject to Valine amide.

Belongs to the arthropod CHH/MIH/GIH/VIH hormone family. As to expression, produced by the medulla terminalis X-organ in the eyestalks and transported to the sinus gland where they are stored and released.

The protein localises to the secreted. In terms of biological role, hormone found in the sinus gland of isopods and decapods which controls the blood sugar level. Has a secretagogue action over the amylase released from the midgut gland. May act as a stress hormone and may be involved in the control of molting and reproduction. In Penaeus japonicus (Kuruma prawn), this protein is Crustacean hyperglycemic hormones 5.